Here is a 269-residue protein sequence, read N- to C-terminus: 3-methyl-2-oxobutanoate hydroxymethyltransferase (269 aa).

Positions 48 and 87 each coordinate Mg(2+). 3-methyl-2-oxobutanoate is bound by residues 48–49, aspartate 87, and lysine 116; that span reads DS. Residue glutamate 118 participates in Mg(2+) binding. Residue glutamate 185 is the Proton acceptor of the active site.

It belongs to the PanB family. As to quaternary structure, homodecamer; pentamer of dimers. Mg(2+) is required as a cofactor.

Its subcellular location is the cytoplasm. The catalysed reaction is 3-methyl-2-oxobutanoate + (6R)-5,10-methylene-5,6,7,8-tetrahydrofolate + H2O = 2-dehydropantoate + (6S)-5,6,7,8-tetrahydrofolate. The protein operates within cofactor biosynthesis; (R)-pantothenate biosynthesis; (R)-pantoate from 3-methyl-2-oxobutanoate: step 1/2. Its function is as follows. Catalyzes the reversible reaction in which hydroxymethyl group from 5,10-methylenetetrahydrofolate is transferred onto alpha-ketoisovalerate to form ketopantoate. The protein is 3-methyl-2-oxobutanoate hydroxymethyltransferase of Campylobacter curvus (strain 525.92).